The sequence spans 618 residues: UvrABC system protein C (618 aa).

A GIY-YIG domain is found at 13–92; that stretch reads DKPGVYLMKN…IKKYRPKYNI (80 aa). The UVR domain maps to 204–239; sequence LDIVENFKLNMEKAAENLEFEKAAMLRDKINIIEKI.

The protein belongs to the UvrC family. In terms of assembly, interacts with UvrB in an incision complex.

The protein localises to the cytoplasm. The UvrABC repair system catalyzes the recognition and processing of DNA lesions. UvrC both incises the 5' and 3' sides of the lesion. The N-terminal half is responsible for the 3' incision and the C-terminal half is responsible for the 5' incision. The chain is UvrABC system protein C from Clostridium botulinum (strain Loch Maree / Type A3).